The chain runs to 423 residues: F-box protein At1g52495 (423 aa).

The region spanning 49–95 is the F-box domain; it reads KLKDVHLPLDLIVEILKKLPTKSLMRFRCVSKPWSFIISKRRDFVES.

The sequence is that of F-box protein At1g52495 from Arabidopsis thaliana (Mouse-ear cress).